A 65-amino-acid chain; its full sequence is UPF0434 protein BQ10150 (65 aa).

Belongs to the UPF0434 family.

The sequence is that of UPF0434 protein BQ10150 from Bartonella quintana (strain Toulouse) (Rochalimaea quintana).